The sequence spans 433 residues: UPF0597 protein PG_0909 (433 aa).

The protein belongs to the UPF0597 family.

This is UPF0597 protein PG_0909 from Porphyromonas gingivalis (strain ATCC BAA-308 / W83).